A 179-amino-acid chain; its full sequence is Replication restart protein DnaT (179 aa).

Residues 156 to 179 (GGLPKRDVNTVSEPDSQIPPGFRG) are disordered.

This sequence belongs to the DnaT family. Homooligomerizes. Interacts with PriB. Component of the replication restart primosome. Primosome assembly occurs via a 'hand-off' mechanism. PriA binds to replication forks, subsequently PriB then DnaT bind; DnaT then displaces ssDNA to generate the helicase loading substrate.

In terms of biological role, involved in the restart of stalled replication forks, which reloads the replicative helicase on sites other than the origin of replication. Can function in multiple replication restart pathways. Displaces ssDNA from a PriB-ssDNA complex. Probably forms a spiral filament on ssDNA. This Shigella dysenteriae serotype 1 (strain Sd197) protein is Replication restart protein DnaT.